Consider the following 505-residue polypeptide: 2-methylcitrate dehydratase (505 aa).

The protein belongs to the PrpD family. In terms of assembly, monomer.

The catalysed reaction is (2S,3S)-2-methylcitrate = 2-methyl-cis-aconitate + H2O. It catalyses the reaction citrate = D-threo-isocitrate. It participates in organic acid metabolism; propanoate degradation. Its pathway is carbohydrate metabolism; tricarboxylic acid cycle; isocitrate from oxaloacetate: step 1/2. Its function is as follows. Involved in the catabolism of short chain fatty acids (SCFA) via the tricarboxylic acid (TCA)(acetyl degradation route) and via the 2-methylcitrate cycle I (propionate degradation route). Catalyzes the dehydration of 2-methylcitrate (2-MC) to yield the cis isomer of 2-methyl-aconitate. Could also catalyze the dehydration of citrate and the hydration of cis-aconitate. In Mycobacterium tuberculosis (strain ATCC 35801 / TMC 107 / Erdman), this protein is 2-methylcitrate dehydratase.